Reading from the N-terminus, the 267-residue chain is Outer membrane protein assembly factor BamD (267 aa).

The first 16 residues, 1-16, serve as a signal peptide directing secretion; it reads MKKILLTVSLGLALSA. Cys-17 carries the N-palmitoyl cysteine lipid modification. Cys-17 carries the S-diacylglycerol cysteine lipid modification.

This sequence belongs to the BamD family. As to quaternary structure, part of the Bam complex.

The protein resides in the cell outer membrane. In terms of biological role, part of the outer membrane protein assembly complex, which is involved in assembly and insertion of beta-barrel proteins into the outer membrane. Required for efficient transformation of Neisseria gonorrhoeae by species-related DNA. The sequence is that of Outer membrane protein assembly factor BamD from Neisseria gonorrhoeae.